Reading from the N-terminus, the 142-residue chain is 5-hydroxymethyl-dUMP N-hydrolase (142 aa).

5-hydroxymethyl-dUMP contacts are provided by G7, I9, R10, G11, S78, G80, E84, and S108.

Belongs to the 2'-deoxynucleoside 5'-phosphate N-hydrolase 1 family. In terms of assembly, monomer and homodimer.

The protein localises to the cytoplasm. It is found in the nucleus. The catalysed reaction is 5-hydroxymethyl-dUMP + H2O = 5-hydroxymethyluracil + 2-deoxy-D-ribose 5-phosphate. Part of a nucleotide salvage pathway that eliminates epigenetically modified 5-hydroxymethyl-dCMP (hmdCMP) in a two-step process entailing deamination to cytotoxic 5-hydroxymethyl-dUMP (hmdUMP), followed by its hydrolysis into 5-hydroxymethyluracil (hmU) and 2-deoxy-D-ribose 5-phosphate (deoxyribosephosphate). Catalyzes the second step in that pathway, the hydrolysis of the N-glycosidic bond in hmdUMP, degrading this cytotoxic nucleotide to avoid its genomic integration. This chain is 5-hydroxymethyl-dUMP N-hydrolase (dnph1), found in Tetraodon nigroviridis (Spotted green pufferfish).